Here is a 201-residue protein sequence, read N- to C-terminus: 3-isopropylmalate dehydratase small subunit (201 aa).

This sequence belongs to the LeuD family. LeuD type 1 subfamily. As to quaternary structure, heterodimer of LeuC and LeuD.

It carries out the reaction (2R,3S)-3-isopropylmalate = (2S)-2-isopropylmalate. It functions in the pathway amino-acid biosynthesis; L-leucine biosynthesis; L-leucine from 3-methyl-2-oxobutanoate: step 2/4. In terms of biological role, catalyzes the isomerization between 2-isopropylmalate and 3-isopropylmalate, via the formation of 2-isopropylmaleate. This is 3-isopropylmalate dehydratase small subunit from Shewanella putrefaciens (strain CN-32 / ATCC BAA-453).